A 106-amino-acid polypeptide reads, in one-letter code: Large ribosomal subunit protein uL24 (106 aa).

Belongs to the universal ribosomal protein uL24 family. In terms of assembly, part of the 50S ribosomal subunit.

Functionally, one of two assembly initiator proteins, it binds directly to the 5'-end of the 23S rRNA, where it nucleates assembly of the 50S subunit. Its function is as follows. One of the proteins that surrounds the polypeptide exit tunnel on the outside of the subunit. The chain is Large ribosomal subunit protein uL24 from Spiroplasma kunkelii.